We begin with the raw amino-acid sequence, 160 residues long: Serine-protein kinase RsbW (160 aa).

The protein belongs to the anti-sigma-factor family.

The catalysed reaction is L-seryl-[protein] + ATP = O-phospho-L-seryl-[protein] + ADP + H(+). The enzyme catalyses L-threonyl-[protein] + ATP = O-phospho-L-threonyl-[protein] + ADP + H(+). Negative regulator of sigma-B activity. Phosphorylates and inactivates its specific antagonist protein, RsbV. Upon phosphorylation of RsbV, RsbW is released and binds to sigma-B, thereby blocking its ability to form an RNA polymerase holoenzyme (E-sigma-B). This Bacillus cereus (strain ATCC 10987 / NRS 248) protein is Serine-protein kinase RsbW.